A 173-amino-acid polypeptide reads, in one-letter code: Alpha-crystallin A chain (173 aa).

At Met-1 the chain carries N-acetylmethionine. The interval 1–63 is required for complex formation with BFSP1 and BFSP2; it reads MDIAIQHPWF…RTVLDSGVSE (63 aa). Deamidated glutamine; partial is present on Gln-6. Position 45 is a phosphoserine (Ser-45). Deamidated glutamine; partial is present on Gln-50. The 111-residue stretch at 52–162 folds into the sHSP domain; the sequence is LFRTVLDSGV…GHSERAIPVS (111 aa). Lys-70 carries the post-translational modification N6-acetyllysine. His-79 serves as a coordination point for Zn(2+). Deamidated glutamine; partial is present on Gln-90. N6-acetyllysine is present on Lys-99. His-100 is a Zn(2+) binding site. At Asn-101 the chain carries Deamidated asparagine; partial. 2 residues coordinate Zn(2+): Glu-102 and His-107. Ser-122 is modified (phosphoserine). Asn-123 carries the deamidated asparagine; partial modification. Residues 144 to 173 form a disordered region; it reads PKVPSGVDAGHSERAIPVSREEKPSSAPTS. Residues 153–167 are compositionally biased toward basic and acidic residues; sequence GHSERAIPVSREEKP. His-154 provides a ligand contact to Zn(2+). The O-linked (GlcNAc) serine glycan is linked to Ser-162.

Belongs to the small heat shock protein (HSP20) family. As to quaternary structure, heteromer composed of three CRYAA and one CRYAB subunits. Inter-subunit bridging via zinc ions enhances stability, which is crucial as there is no protein turn over in the lens. Can also form homodimers and homotetramers (dimers of dimers) which serve as the building blocks of homooligomers. Within homooligomers, the zinc-binding motif is created from residues of 3 different molecules. His-100 and Glu-102 from one molecule are ligands of the zinc ion, and His-107 and His-154 residues from additional molecules complete the site with tetrahedral coordination geometry. Part of a complex required for lens intermediate filament formation composed of BFSP1, BFSP2 and CRYAA. Acetylation at Lys-70 may increase chaperone activity. Post-translationally, undergoes age-dependent proteolytical cleavage at the C-terminus.

It is found in the cytoplasm. The protein localises to the nucleus. Contributes to the transparency and refractive index of the lens. Acts as a chaperone, preventing aggregation of various proteins under a wide range of stress conditions. Required for the correct formation of lens intermediate filaments as part of a complex composed of BFSP1, BFSP2 and CRYAA. The chain is Alpha-crystallin A chain (CRYAA) from Sus scrofa (Pig).